A 1097-amino-acid chain; its full sequence is Kinesin-like protein KIF1C (1097 aa).

The Kinesin motor domain occupies 5–347 (SVKVAVRVRP…LRYADRTKQI (343 aa)). 96-103 (GQTGAGKS) provides a ligand contact to ATP. Ser-294 bears the Phosphoserine mark. Residues 358–380 (NARLIRELQEEVARLRELLMAQG) are a coiled coil. Residues 397 to 434 (GGVLPAASSPPAPASPSSPPPHNGELEPSFSPSAEPQI) form a disordered region. Residues 404-418 (SSPPAPASPSSPPPH) show a composition bias toward pro residues. Residues 437–478 (EEAMERLQETEKIIAELNETWEEKLRKTEALRMEREALLAEM) adopt a coiled-coil conformation. Ser-491 carries the phosphoserine modification. The FHA domain maps to 520–587 (TRVGQVDVDI…LKSGNRIVMG (68 aa)). A coiled-coil region spans residues 630–671 (EQQGIDIKLEMEKRLQDLENQYRKEKEEADLLLEQQRLYADS). Residues Ser-671 and Ser-673 each carry the phosphoserine modification. The stretch at 824–868 (AEVEDLRAHIDKLTGILQEVKLQNSSKDRELQALRDRMLRMERVI) forms a coiled coil. 2 disordered regions span residues 897-921 (EAVSNDHSPAVRPSSPPQSSWERVS) and 946-1097 (QGLQ…GAAV). Ser-911 is modified (phosphoserine). Residues 949–958 (QGSGGRGGGL) are compositionally biased toward gly residues. Pro residues predominate over residues 997 to 1015 (GPQPPEEVTAPPPPPNRRP). Basic residues predominate over residues 1016–1026 (PSPRRPHRPRR). A Phosphoserine modification is found at Ser-1028. Position 1036 is an omega-N-methylarginine (Arg-1036). Residues 1059–1077 (QPQPYPAQRPGPRYPPYTT) are compositionally biased toward pro residues. Thr-1077 bears the Phosphothreonine mark. Ser-1086 carries the phosphoserine modification. Basic and acidic residues predominate over residues 1086 to 1097 (SAPDLKESGAAV).

The protein belongs to the TRAFAC class myosin-kinesin ATPase superfamily. Kinesin family. Unc-104 subfamily.

The protein resides in the cytoplasm. Its subcellular location is the cytoskeleton. Probable motor protein. The chain is Kinesin-like protein KIF1C (Kif1c) from Rattus norvegicus (Rat).